The following is a 109-amino-acid chain: Nucleoid-associated protein ECA1177 (109 aa).

It belongs to the YbaB/EbfC family. In terms of assembly, homodimer.

It is found in the cytoplasm. Its subcellular location is the nucleoid. In terms of biological role, binds to DNA and alters its conformation. May be involved in regulation of gene expression, nucleoid organization and DNA protection. This Pectobacterium atrosepticum (strain SCRI 1043 / ATCC BAA-672) (Erwinia carotovora subsp. atroseptica) protein is Nucleoid-associated protein ECA1177.